A 599-amino-acid polypeptide reads, in one-letter code: Purine-uracil permease NCS1 (599 aa).

Transmembrane regions (helical) follow at residues 140–160, 164–184, 218–238, 257–277, 293–313, 327–347, 363–383, 411–433, 445–465, 474–494, 525–545, and 560–580; these read LWIG…LVDL, WWQG…PLVL, LVGC…IFLL, TSPL…CIVW, ILIS…GGFG, FWTL…TLAL, IIGQ…GVAV, TLLA…NVVA, FFTF…FQPW, FVYT…GIIL, YNVA…PGFL, and VVYD…YWII.

It belongs to the purine-cytosine permease (2.A.39) family. In terms of tissue distribution, expressed in roots, leaves, stems, flowers, siliques and seeds.

The protein resides in the plastid. It is found in the chloroplast envelope. The protein localises to the chloroplast membrane. In terms of biological role, nucleobase-proton symporter that facilitates the uptake of nucleobases in the cells. Can transport adenine, guanine and uracil. Contributes to uracil import into plastids for plastidic uracil salvage which is essential for plant growth and development. In Arabidopsis thaliana (Mouse-ear cress), this protein is Purine-uracil permease NCS1.